We begin with the raw amino-acid sequence, 62 residues long: DNA-binding protein 7 (62 aa).

Belongs to the 7 kDa DNA-binding/endoribonuclease P2 family. As to quaternary structure, monomer.

It localises to the cytoplasm. Its function is as follows. Can constrain negative DNA supercoils. May be involved in maintaining the integrity of the genome at high temperature. This chain is DNA-binding protein 7, found in Metallosphaera sedula (strain ATCC 51363 / DSM 5348 / JCM 9185 / NBRC 15509 / TH2).